The chain runs to 465 residues: MAPKKHSAFMVFVTEWRNHNVEGRRMTLPQAVSHCGTIWEKMTAQQRGPYQSGAKDADVADRAKRERLNCHGQGIAQVDQVQKEAAESLMHMKRSTERLVINAKKSHDLENAKFVFATFNYFTKALTTDVYVPAEFAACEYSLKEGIRSIYSSMIDPGQIIFGQGSDALHHSSTTHDLPLPPNALGEKNMAKLYRNIIDYLTKCQGGDKPLIVFTPAENIAMVKSCFRYLECEDDSKDGGRTIQVFDIEYLLFILKKEVMDVADLNDEKINKFVTDAFFKKDFFEFTAGIACQYHEDNDRTKYCTQSMVTRWAYTFSDFMCGDLAITVQPGKHIPAHTKPNYRIISSDASSLAHESSFDSFYSLPGSRVKKENQSEDVLLSSSRPSVESSSYTPTDHTAFTADLSKLCEFPSLGMRNSSKHRGLDVSAQRERNAGAWNLPTHSRSIQKFSDNDFSVTGADGKHKN.

Residues 2–69 (APKKHSAFMV…ADRAKRERLN (68 aa)) constitute a DNA-binding region (HMG box). Disordered stretches follow at residues 373-394 (NQSE…SYTP) and 419-443 (SKHR…PTHS). The span at 381-391 (SSSRPSVESSS) shows a compositional bias: low complexity. Positions 422–433 (RGLDVSAQRERN) are enriched in basic and acidic residues.

This sequence belongs to the maelstrom family.

The protein resides in the cytoplasm. It is found in the nucleus. Its function is as follows. Involved both in the piRNA and miRNA metabolic processes. As a component of the meiotic nuage, plays a central role during oogenesis by repressing transposable elements and preventing their mobilization, which is essential for the germline integrity. Repression of transposable elements is mediated via the piRNA metabolic process, which mediates the repression of transposable elements during meiosis by forming complexes composed of piRNAs and Piwi proteins and governs the repression of transposons. As a nuclear component, it is required for proper differentiation in the germline stem cell (GSC) lineage by repressing microRNA-7 (miR-7), thereby acting as an indirect regulator of bag-of-marbles (Bam). Acts by binding to the promoter of miR-7 gene and repressing its expression; miR-7 repression alleviates the Bam repression by miR-7, thereby allowing differentiation in the germline stem cell (GSC) lineage. In Drosophila erecta (Fruit fly), this protein is Protein maelstrom (mael).